The sequence spans 136 residues: UPF0225 protein Mpe_A2093 (136 aa).

This sequence belongs to the UPF0225 family.

The sequence is that of UPF0225 protein Mpe_A2093 from Methylibium petroleiphilum (strain ATCC BAA-1232 / LMG 22953 / PM1).